Reading from the N-terminus, the 335-residue chain is Ketol-acid reductoisomerase (NAD(P)(+)) (335 aa).

Residues 2–182 form the KARI N-terminal Rossmann domain; it reads AKIYKDEDIS…GCARAGVIES (181 aa). NADP(+) is bound by residues 25–28, Arg-49, Ser-53, and 83–86; these read YGSQ and DMVQ. The active site involves His-108. Gly-134 is a binding site for NADP(+). The KARI C-terminal knotted domain maps to 183 to 328; sequence TFKEETETDL…RKLREMMFRG (146 aa). Mg(2+) contacts are provided by Asp-191, Glu-195, Glu-227, and Glu-231. A substrate-binding site is contributed by Ser-252.

Belongs to the ketol-acid reductoisomerase family. As to quaternary structure, homodimer. Requires Mg(2+) as cofactor.

It carries out the reaction (2R)-2,3-dihydroxy-3-methylbutanoate + NAD(+) = (2S)-2-acetolactate + NADH + H(+). It catalyses the reaction (2R)-2,3-dihydroxy-3-methylbutanoate + NADP(+) = (2S)-2-acetolactate + NADPH + H(+). Its pathway is amino-acid biosynthesis; L-isoleucine biosynthesis; L-isoleucine from 2-oxobutanoate: step 2/4. It functions in the pathway amino-acid biosynthesis; L-valine biosynthesis; L-valine from pyruvate: step 2/4. Its function is as follows. Involved in the biosynthesis of branched-chain amino acids (BCAA). Catalyzes an alkyl-migration followed by a ketol-acid reduction of (S)-2-acetolactate (S2AL) to yield (R)-2,3-dihydroxy-isovalerate. In the isomerase reaction, S2AL is rearranged via a Mg-dependent methyl migration to produce 3-hydroxy-3-methyl-2-ketobutyrate (HMKB). In the reductase reaction, this 2-ketoacid undergoes a metal-dependent reduction by NADPH or NADH to yield (R)-2,3-dihydroxy-isovalerate. This chain is Ketol-acid reductoisomerase (NAD(P)(+)), found in Ignisphaera aggregans (strain DSM 17230 / JCM 13409 / AQ1.S1).